The chain runs to 362 residues: Thiol protease aleurain (362 aa).

Residues 1 to 22 (MAHARVLLLALAVLATAAVAVA) form the signal peptide. A propeptide spans 23–143 (SSSSFADSNP…GNHLMRDAAA (121 aa)) (activation peptide). 2 cysteine pairs are disulfide-bonded: C165–C208 and C199–C241. The active site involves C168. An N-linked (GlcNAc...) asparagine glycan is attached at N188. N257 is a glycosylation site (N-linked (GlcNAc...) asparagine). A disulfide bond links C299 and C349. Catalysis depends on residues H308 and N328.

Belongs to the peptidase C1 family.

The protein resides in the vacuole. The enzyme catalyses Hydrolysis of proteins, acting as an aminopeptidase (notably, cleaving Arg-|-Xaa bonds) as well as an endopeptidase.. Its function is as follows. May play a role in proteolysis leading to mobilization of nitrogen during senescence and starvation. The chain is Thiol protease aleurain from Hordeum vulgare (Barley).